A 146-amino-acid chain; its full sequence is Hemoglobin subunit beta (146 aa).

Val1 is subject to N-acetylvaline. The region spanning 2 to 146 is the Globin domain; it reads HLTADEKVSL…VANALAHKYH (145 aa). Ser44 carries the post-translational modification Phosphoserine. Lys59 carries the N6-acetyllysine modification. A heme b-binding site is contributed by His63. N6-acetyllysine is present on Lys82. His92 contacts heme b. Cys93 is modified (S-nitrosocysteine). Lys144 carries the N6-acetyllysine modification.

Belongs to the globin family. In terms of assembly, heterotetramer of two alpha chains and two beta chains. As to expression, red blood cells.

Its function is as follows. Involved in oxygen transport from the lung to the various peripheral tissues. The polypeptide is Hemoglobin subunit beta (Tamias striatus (Eastern chipmunk)).